We begin with the raw amino-acid sequence, 502 residues long: Probable cytosol aminopeptidase (502 aa).

Residues Lys269 and Asp274 each contribute to the Mn(2+) site. Lys281 is a catalytic residue. Asp292, Asp351, and Glu353 together coordinate Mn(2+). The active site involves Arg355.

Belongs to the peptidase M17 family. Mn(2+) is required as a cofactor.

It is found in the cytoplasm. The catalysed reaction is Release of an N-terminal amino acid, Xaa-|-Yaa-, in which Xaa is preferably Leu, but may be other amino acids including Pro although not Arg or Lys, and Yaa may be Pro. Amino acid amides and methyl esters are also readily hydrolyzed, but rates on arylamides are exceedingly low.. It catalyses the reaction Release of an N-terminal amino acid, preferentially leucine, but not glutamic or aspartic acids.. In terms of biological role, presumably involved in the processing and regular turnover of intracellular proteins. Catalyzes the removal of unsubstituted N-terminal amino acids from various peptides. The polypeptide is Probable cytosol aminopeptidase (Aliivibrio fischeri (strain MJ11) (Vibrio fischeri)).